A 155-amino-acid chain; its full sequence is Large ribosomal subunit protein uL22c (155 aa).

It belongs to the universal ribosomal protein uL22 family. In terms of assembly, part of the 50S ribosomal subunit.

The protein localises to the plastid. Its subcellular location is the chloroplast. Its function is as follows. This protein binds specifically to 23S rRNA. The globular domain of the protein is located near the polypeptide exit tunnel on the outside of the subunit, while an extended beta-hairpin is found that lines the wall of the exit tunnel in the center of the 70S ribosome. The polypeptide is Large ribosomal subunit protein uL22c (rpl22) (Atropa belladonna (Belladonna)).